Reading from the N-terminus, the 252-residue chain is tRNA pseudouridine synthase A (252 aa).

Residue Asp52 is the Nucleophile of the active site. Tyr110 lines the substrate pocket.

It belongs to the tRNA pseudouridine synthase TruA family. As to quaternary structure, homodimer.

It carries out the reaction uridine(38/39/40) in tRNA = pseudouridine(38/39/40) in tRNA. Functionally, formation of pseudouridine at positions 38, 39 and 40 in the anticodon stem and loop of transfer RNAs. The sequence is that of tRNA pseudouridine synthase A from Syntrophotalea carbinolica (strain DSM 2380 / NBRC 103641 / GraBd1) (Pelobacter carbinolicus).